Here is a 124-residue protein sequence, read N- to C-terminus: Small ribosomal subunit protein uS12 (124 aa).

3-methylthioaspartic acid is present on Asp89. The interval 103–124 (DTAGVQNRNRGRSKYGAKRPKK) is disordered. The segment covering 111–124 (NRGRSKYGAKRPKK) has biased composition (basic residues).

It belongs to the universal ribosomal protein uS12 family. Part of the 30S ribosomal subunit. Contacts proteins S8 and S17. May interact with IF1 in the 30S initiation complex.

Its function is as follows. With S4 and S5 plays an important role in translational accuracy. Functionally, interacts with and stabilizes bases of the 16S rRNA that are involved in tRNA selection in the A site and with the mRNA backbone. Located at the interface of the 30S and 50S subunits, it traverses the body of the 30S subunit contacting proteins on the other side and probably holding the rRNA structure together. The combined cluster of proteins S8, S12 and S17 appears to hold together the shoulder and platform of the 30S subunit. This chain is Small ribosomal subunit protein uS12, found in Desulforudis audaxviator (strain MP104C).